Consider the following 358-residue polypeptide: Molybdenum import ATP-binding protein ModC 2 (358 aa).

In terms of domain architecture, ABC transporter spans 1–234 (MPEQGIEAQL…PRLPLNHPDE (234 aa)). ATP is bound at residue 35–42 (GRSGSGKT). The region spanning 293–358 (NSSILNILRV…AQIKSVALME (66 aa)) is the Mop domain.

Belongs to the ABC transporter superfamily. Molybdate importer (TC 3.A.1.8) family. As to quaternary structure, the complex is composed of two ATP-binding proteins (ModC), two transmembrane proteins (ModB) and a solute-binding protein (ModA).

The protein resides in the cell inner membrane. The enzyme catalyses molybdate(out) + ATP + H2O = molybdate(in) + ADP + phosphate + H(+). Functionally, part of the ABC transporter complex ModABC involved in molybdenum import. Responsible for energy coupling to the transport system. In Azotobacter vinelandii, this protein is Molybdenum import ATP-binding protein ModC 2.